The primary structure comprises 127 residues: UPF0325 protein VC_2264 (127 aa).

This sequence belongs to the UPF0325 family.

This is UPF0325 protein VC_2264 from Vibrio cholerae serotype O1 (strain ATCC 39315 / El Tor Inaba N16961).